A 225-amino-acid chain; its full sequence is Histone H1.11L (225 aa).

Low complexity-rich tracts occupy residues 1 to 23 and 31 to 43; these read MSET…PAKA and AAGG…PAGP. Disordered stretches follow at residues 1–46 and 94–225; these read MSET…PSVT and SKGT…AKKK. Ser-2 is modified (N-acetylserine). Residues 41-114 form the H15 domain; that stretch reads AGPSVTELIT…GASGSFRLSK (74 aa). 4 stretches are compositionally biased toward basic residues: residues 123–138, 146–163, 171–189, and 198–225; these read APKK…KPAA, KKPK…KAKK, KSAK…KKAV, and KAVK…AKKK.

Belongs to the histone H1/H5 family.

It is found in the nucleus. The protein resides in the chromosome. In terms of biological role, histones H1 are necessary for the condensation of nucleosome chains into higher-order structures. The sequence is that of Histone H1.11L from Gallus gallus (Chicken).